We begin with the raw amino-acid sequence, 361 residues long: Phosphoserine aminotransferase (361 aa).

Arg42 is an L-glutamate binding site. Pyridoxal 5'-phosphate-binding positions include 76–77 (AT), Trp102, Thr152, Asp172, and Gln195. An N6-(pyridoxal phosphate)lysine modification is found at Lys196. Residue 237 to 238 (NT) participates in pyridoxal 5'-phosphate binding.

The protein belongs to the class-V pyridoxal-phosphate-dependent aminotransferase family. SerC subfamily. In terms of assembly, homodimer. The cofactor is pyridoxal 5'-phosphate.

The protein resides in the cytoplasm. The catalysed reaction is O-phospho-L-serine + 2-oxoglutarate = 3-phosphooxypyruvate + L-glutamate. The enzyme catalyses 4-(phosphooxy)-L-threonine + 2-oxoglutarate = (R)-3-hydroxy-2-oxo-4-phosphooxybutanoate + L-glutamate. It participates in amino-acid biosynthesis; L-serine biosynthesis; L-serine from 3-phospho-D-glycerate: step 2/3. The protein operates within cofactor biosynthesis; pyridoxine 5'-phosphate biosynthesis; pyridoxine 5'-phosphate from D-erythrose 4-phosphate: step 3/5. Functionally, catalyzes the reversible conversion of 3-phosphohydroxypyruvate to phosphoserine and of 3-hydroxy-2-oxo-4-phosphonooxybutanoate to phosphohydroxythreonine. The sequence is that of Phosphoserine aminotransferase from Stenotrophomonas maltophilia (strain K279a).